Consider the following 422-residue polypeptide: NADH-quinone oxidoreductase subunit F (422 aa).

Positions 1–26 (MLKEEDKIFTNLHGQQSHDLKSSKKR) are disordered. The span at 16–26 (QSHDLKSSKKR) shows a compositional bias: basic and acidic residues. 54-63 (GRGGAGFSTG) contributes to the NAD(+) binding site. Position 166 to 213 (166 to 213 (GAGAYICGEETALLESLEGKKGMPRLKPPFPAGFGLYGCPTTINNVES)) interacts with FMN. [4Fe-4S] cluster contacts are provided by Cys-344, Cys-347, Cys-350, and Cys-390.

It belongs to the complex I 51 kDa subunit family. FMN serves as cofactor. [4Fe-4S] cluster is required as a cofactor.

It catalyses the reaction a quinone + NADH + 5 H(+)(in) = a quinol + NAD(+) + 4 H(+)(out). Its function is as follows. NDH-1 shuttles electrons from NADH, via FMN and iron-sulfur (Fe-S) centers, to quinones in the respiratory chain. Couples the redox reaction to proton translocation (for every two electrons transferred, four hydrogen ions are translocated across the cytoplasmic membrane), and thus conserves the redox energy in a proton gradient. The sequence is that of NADH-quinone oxidoreductase subunit F (nuoF) from Rickettsia felis (strain ATCC VR-1525 / URRWXCal2) (Rickettsia azadi).